A 325-amino-acid polypeptide reads, in one-letter code: Natural cytotoxicity triggering receptor 1 (325 aa).

The N-terminal stretch at 1-16 is a signal peptide; that stretch reads MLPTLTALLCLGLCLS. The Extracellular portion of the chain corresponds to 17–255; the sequence is QRINTEKETL…SAFWDHTTQN (239 aa). 2 consecutive Ig-like domains span residues 34–118 and 129–211; these read KPSI…LVVT and YPRP…LLIT. C49 and C98 form a disulfide bridge. N139 is a glycosylation site (N-linked (GlcNAc...) asparagine). An intrachain disulfide couples C144 to C190. N216 and N238 each carry an N-linked (GlcNAc...) asparagine glycan. The chain crosses the membrane as a helical span at residues 256 to 273; sequence LIRIGLACIILITLVWLL. The Cytoplasmic segment spans residues 274-325; sequence TEDWLSKRKDHEEANRLTNWECRRRWRMQHYFEEEQRNAISMMELKATPGAL.

The protein belongs to the natural cytotoxicity receptor (NCR) family. Interacts with CD3Z and FCER1G. As to expression, selectively expressed by NK cells.

It localises to the cell membrane. Cytotoxicity-activating receptor that may contribute to the increased efficiency of activated natural killer (NK) cells to mediate tumor cell lysis. In Mus musculus (Mouse), this protein is Natural cytotoxicity triggering receptor 1 (Ncr1).